We begin with the raw amino-acid sequence, 489 residues long: Rhamnulokinase (489 aa).

ATP is bound at residue 13–17 (ASSGR). The cysteines at positions 68 and 222 are disulfide-linked. Substrate contacts are provided by residues G83 and 236–238 (HDT). D237 serves as the catalytic Proton acceptor. T259 serves as a coordination point for ATP. Residue N296 coordinates substrate. Position 304 (Q304) interacts with ATP. A disulfide bridge links C353 with C370. G402 contributes to the ATP binding site. C413 and C417 form a disulfide bridge.

This sequence belongs to the rhamnulokinase family. Mg(2+) is required as a cofactor.

The enzyme catalyses L-rhamnulose + ATP = L-rhamnulose 1-phosphate + ADP + H(+). The protein operates within carbohydrate degradation; L-rhamnose degradation; glycerone phosphate from L-rhamnose: step 2/3. In terms of biological role, involved in the catabolism of L-rhamnose (6-deoxy-L-mannose). Catalyzes the transfer of the gamma-phosphate group from ATP to the 1-hydroxyl group of L-rhamnulose to yield L-rhamnulose 1-phosphate. The chain is Rhamnulokinase from Enterobacter sp. (strain 638).